Reading from the N-terminus, the 519-residue chain is SMR domain-containing protein At5g58720 (519 aa).

Over residues 1–15 (MKQKNQHKKKKKRSC) the composition is skewed to basic residues. Disordered stretches follow at residues 1-47 (MKQK…REIE) and 92-128 (ESGDDPSTSSVASGSSGQETASTSEYGAGSSSSCSED). The span at 28–47 (GNKKDVEEERKDGEGKREIE) shows a compositional bias: basic and acidic residues. Over residues 98 to 127 (STSSVASGSSGQETASTSEYGAGSSSSCSE) the composition is skewed to low complexity. The Smr domain maps to 428-502 (IDLHGQHVKP…NRGTLLIKLD (75 aa)).

As to quaternary structure, interacts with PRL1.

This chain is SMR domain-containing protein At5g58720, found in Arabidopsis thaliana (Mouse-ear cress).